Consider the following 699-residue polypeptide: Elongation factor G (699 aa).

Residues 8–288 enclose the tr-type G domain; that stretch reads EDYRNFGIMA…AVVDYLPSPI (281 aa). GTP is bound by residues 17–24, 86–90, and 140–143; these read AHIDAGKT, DTPGH, and NKMD.

This sequence belongs to the TRAFAC class translation factor GTPase superfamily. Classic translation factor GTPase family. EF-G/EF-2 subfamily.

Its subcellular location is the cytoplasm. Catalyzes the GTP-dependent ribosomal translocation step during translation elongation. During this step, the ribosome changes from the pre-translocational (PRE) to the post-translocational (POST) state as the newly formed A-site-bound peptidyl-tRNA and P-site-bound deacylated tRNA move to the P and E sites, respectively. Catalyzes the coordinated movement of the two tRNA molecules, the mRNA and conformational changes in the ribosome. The sequence is that of Elongation factor G from Sinorhizobium fredii (strain NBRC 101917 / NGR234).